The chain runs to 472 residues: ATP synthase subunit beta (472 aa).

Residue 149-156 coordinates ATP; sequence GGAGVGKT.

Belongs to the ATPase alpha/beta chains family. F-type ATPases have 2 components, CF(1) - the catalytic core - and CF(0) - the membrane proton channel. CF(1) has five subunits: alpha(3), beta(3), gamma(1), delta(1), epsilon(1). CF(0) has three main subunits: a(1), b(2) and c(9-12). The alpha and beta chains form an alternating ring which encloses part of the gamma chain. CF(1) is attached to CF(0) by a central stalk formed by the gamma and epsilon chains, while a peripheral stalk is formed by the delta and b chains.

The protein localises to the cell inner membrane. The enzyme catalyses ATP + H2O + 4 H(+)(in) = ADP + phosphate + 5 H(+)(out). In terms of biological role, produces ATP from ADP in the presence of a proton gradient across the membrane. The catalytic sites are hosted primarily by the beta subunits. This Pelagibacter ubique (strain HTCC1062) protein is ATP synthase subunit beta.